Consider the following 179-residue polypeptide: Auxin-induced protein IAA6 (179 aa).

Residues 13–17 carry the EAR-like (transcriptional repression) motif; the sequence is LRLGL. A disordered region spans residues 31-52; that stretch reads FSEIDGGVEENGGSGDRKSVDK. A PB1 domain is found at 75 to 163; the sequence is KMYMKVSMDG…KRLRIMKRSD (89 aa).

The protein belongs to the Aux/IAA family. As to quaternary structure, homodimers and heterodimers.

The protein localises to the nucleus. In terms of biological role, aux/IAA proteins are short-lived transcriptional factors that function as repressors of early auxin response genes at low auxin concentrations. Repression is thought to result from the interaction with auxin response factors (ARFs), proteins that bind to the auxin-responsive promoter element (AuxRE). Formation of heterodimers with ARF proteins may alter their ability to modulate early auxin response genes expression. This Pisum sativum (Garden pea) protein is Auxin-induced protein IAA6 (IAA6).